Consider the following 84-residue polypeptide: Neurotoxin BM10-1-like (84 aa).

Positions 1–21 are cleaved as a signal peptide; sequence MKTLLLTLVVVTIVCLDLGYT. Disulfide bonds link C24-C47, C27-C32, C40-C64, C68-C76, and C77-C82.

This sequence belongs to the three-finger toxin family. Ancestral subfamily. Orphan group IV sub-subfamily. In terms of tissue distribution, expressed by the venom gland.

Its subcellular location is the secreted. Binds and inhibits muscular and neuronal nicotinic acetylcholine receptors (nAChR). In Bungarus multicinctus (Many-banded krait), this protein is Neurotoxin BM10-1-like.